Consider the following 2948-residue polypeptide: Transforming acidic coiled-coil-containing protein 2 (2948 aa).

The span at 1–30 shows a compositional bias: polar residues; sequence MGNENSTSDNQRTLSAQTPRSAQPPGNSQN. Disordered regions lie at residues 1-304, 314-333, 392-453, 465-785, 825-964, 985-1050, 1062-1154, 1243-1274, 1296-1400, 1427-1463, 1493-1661, 1675-1705, 1741-1878, 1907-2035, and 2052-2460; these read MGNE…TDDL, RSNS…QESC, AAGG…MPVS, LVGL…PQGE, SSEK…VSPP, CTGQ…QPDS, ALAP…GEAT, AAQR…VGEP, QPGA…EQIA, PGEK…VTLL, ASDK…GERR, LGNQ…AGEA, VLPG…ESPT, HAGL…SSGT, and LEPR…ETPP. Residues 174–184 show a composition bias toward basic and acidic residues; the sequence is GRERQPKEEGQ. Ser197, Ser201, and Ser269 each carry phosphoserine. Position 325 is a phosphothreonine (Val325). Ser493 carries the phosphoserine modification. Positions 496-507 are enriched in basic and acidic residues; it reads ERGEHLNTEQSH. Phosphoserine occurs at positions 561, 571, and 575. The segment covering 604–629 has biased composition (basic and acidic residues); it reads SKRDPEVGKDELSKPSSDAESRDHPS. Position 758 is a phosphoserine (Ser758). A compositionally biased stretch (low complexity) spans 911 to 926; it reads SDTPTSSPTDMVWESS. Ser962 bears the Phosphoserine mark. The span at 985–996 shows a compositional bias: polar residues; that stretch reads CTGQGPNKSQQA. Ser1025 carries the post-translational modification Phosphoserine. Residues Ser1267 and Ser1313 each carry the phosphoserine modification. A compositionally biased stretch (low complexity) spans 1348 to 1357; the sequence is ATAPGAGAKA. Polar residues predominate over residues 1383 to 1400; it reads DPKQGTSGGVDTSSEQIA. Ser1562 is modified (phosphoserine). Composition is skewed to basic and acidic residues over residues 1801-1823 and 1834-1854; these read DETH…RESP and PKKD…RGAE. Over residues 1862 to 1873 the composition is skewed to low complexity; that stretch reads ADDIIQPAAPAD. Positions 1939 to 1948 are enriched in basic and acidic residues; the sequence is PAKDLSRSSD. Positions 1963–1976 are enriched in pro residues; that stretch reads KAPPAPPPPPPEVI. Ser2072 is subject to Phosphoserine. Polar residues predominate over residues 2074-2102; the sequence is DSVPISKSTLSRSLSLQASDFDGASSSGN. A compositionally biased stretch (low complexity) spans 2114–2124; it reads STGSSSASSTL. Residues 2125-2141 are compositionally biased toward basic residues; the sequence is KRTKKPRPPSLKKKQTT. Phosphoserine occurs at positions 2161 and 2226. Position 2246 is a phosphothreonine (Thr2246). Ser2256 carries the phosphoserine modification. Residues 2265 to 2275 show a composition bias toward basic and acidic residues; sequence LEFDYSEDKSS. The segment covering 2288 to 2305 has biased composition (basic residues); that stretch reads KIGKKPVAKMPLRRPKMK. The region spanning 2315–2403 is the SPAZ domain; that stretch reads PASPPRSPAE…SPASFEIPAS (89 aa). 7 positions are modified to phosphoserine: Ser2317, Ser2321, Ser2359, Ser2389, Ser2392, Ser2394, and Ser2403. The segment covering 2348–2368 has biased composition (polar residues); that stretch reads NPFSSTSKMQESPKLPQQSYN. The span at 2382–2395 shows a compositional bias: low complexity; the sequence is KTSSKTPSSPSKSP. Thr2430, Thr2451, Thr2455, and Thr2458 each carry phosphothreonine. Phosphoserine is present on residues Ser2512 and Ser2534. Thr2553 is subject to Phosphothreonine. Residues 2555–2577 form a disordered region; that stretch reads QESPVKSSPVRMSESPTPCSGSS. A phosphoserine mark is found at Ser2557 and Ser2569. The segment covering 2568–2577 has biased composition (polar residues); the sequence is ESPTPCSGSS. Thr2625 is subject to Phosphothreonine. Coiled coils occupy residues 2675 to 2703 and 2746 to 2947; these read AQKL…LASR and DLDS…KMGK.

It belongs to the TACC family. As to quaternary structure, interacts with CCDC100/CEP120. Interacts with microtubules. Interacts with YEATS4, GCN5L2 and PCAF. Phosphorylated by TTK; which is required for localization in centrosome. In terms of tissue distribution, strongly expressed in heart, skeletal muscle, brain, prostate, thyroid and trachea.

It localises to the cytoplasm. Its subcellular location is the nucleus. The protein resides in the cytoskeleton. The protein localises to the microtubule organizing center. It is found in the centrosome. Plays a role in the microtubule-dependent coupling of the nucleus and the centrosome. Involved in the processes that regulate centrosome-mediated interkinetic nuclear migration (INM) of neural progenitors. May play a role in organizing centrosomal microtubules. May act as a tumor suppressor protein. May represent a tumor progression marker. This chain is Transforming acidic coiled-coil-containing protein 2 (TACC2), found in Homo sapiens (Human).